The chain runs to 4960 residues: Malformin synthetase mlfA (4960 aa).

The tract at residues 194–564 is adenylation 1; sequence ERHATNRPHS…CGRADTQVKL (371 aa). A Carrier 1 domain is found at 705 to 778; the sequence is SRLEQEVQLA…EAASLAEVQE (74 aa). Ser-739 carries the post-translational modification O-(pantetheine 4'-phosphoryl)serine. A condensation 1 region spans residues 816-1247; it reads EDVFPCTTMQ…ALNTLSLLQA (432 aa). The adenylation 2 stretch occupies residues 1275–1650; it reads DRWVTRQPEG…GRKDTQVKLR (376 aa). The 78-residue stretch at 1777–1854 folds into the Carrier 2 domain; the sequence is TPASELERTL…HLAAEVGEPA (78 aa). Disordered regions lie at residues 1855–1883 and 1917–1943; these read GQSA…NDGV and GGSS…KKNA. Composition is skewed to low complexity over residues 1857–1881 and 1919–1936; these read SASS…STND and SSSN…SSSS. The segment at 1989–2404 is condensation 2; the sequence is EDIYPATALQ…AVSCSDKETL (416 aa). The tract at residues 2427-2819 is adenylation 3; that stretch reads RRTPHAPAVC…IGRRDGQLKL (393 aa). Residues 2955 to 3031 form the Carrier 3 domain; the sequence is RPVTSQEREM…QLICHINTIR (77 aa). The residue at position 2992 (Ser-2992) is an O-(pantetheine 4'-phosphoryl)serine. Condensation stretches follow at residues 3049–3464 and 3520–3889; these read VALA…FTFP and SGYV…EQLV. Positions 3914–4304 are adenylation 4; it reads HNSRQAVCAW…VGRKDNQIKF (391 aa). Residues 4438-4514 enclose the Carrier 4 domain; the sequence is MPSTAAERKM…DLSDQAKSLI (77 aa). The residue at position 4475 (Ser-4475) is an O-(pantetheine 4'-phosphoryl)serine. The condensation 5 stretch occupies residues 4551–4878; sequence DVLPTTSFQH…LQTIVQHQNN (328 aa).

Belongs to the NRP synthetase family.

The protein operates within secondary metabolite biosynthesis. Functionally, nonribosomal peptide synthetase; part of the gene cluster that mediates the biosynthesis of malformins, cyclic pentapeptides with a disulfide bond between 2 consecutive cysteins, that show potential anti-tumor as well as antimalarial and antitrypanosomal properties. The nonribosomal peptide synthetase mlfA is responsible of the formation of the cyclic pentapeptide. The malformin biosynthesis clusters in malformin-producing fungi also contain enzymes involved in the formation of the disulfide bond between the two consecutive cysteins within malformins, in addition to additional tailoring enzymes such as methyltransferases or oxidoreductases. They are also composed of up to 4 major facilitator superfamily transporters, and transcription factors probably involved in the regulation of the expression of those clusters. In Aspergillus neoniger (strain CBS 115656), this protein is Malformin synthetase mlfA.